The primary structure comprises 392 residues: MASFTKTVLIPIAHGTEPLEAVAMITVLRRGGADVTVASVETQVGVDACHGIKMVADTLLSDITDSVFDLIVLPGGLPGGETLKNCKSLENMVKKQDSDGRLNAAICCAPALALGTWGLLEGKKATGYPVFMEKLAATCATAVESRVQIDGRIVTSRGPGTTIEFSITLIEQLFGKEKADEVSSILLLRPNPGEEFTFTELNQTNWSFEDTPQILVPIAEESEEIEAIALVDILRRAKANVVIAAVGNSLEVEGSRKAKLVAEVLLDEVAEKSFDLIVLPGGLNGAQRFASCEKLVNMLRKQAEANKPYGGICASPAYVFEPNGLLKGKKATTHPVVSDKLSDKSHIEHRVVVDGNVITSRAPGTAMEFSLAIVEKFYGREKALQLGKATLV.

2 consecutive PfpI endopeptidase domains span residues 6–174 (KTVL…EQLF) and 212–378 (PQIL…EKFY).

This sequence belongs to the peptidase C56 family. Homodimer. Interacts with CSD1 and GPX2.

Its subcellular location is the cytoplasm. It is found in the cytosol. The protein resides in the nucleus. Its function is as follows. Involved in oxidative stress response. Confers protection against diverse stresses by binding both CSD1 and GPX2 and mediating the cytosolic activation of the Cu-Zn-dependent superoxide dismutase activity of CSD1. In Arabidopsis thaliana (Mouse-ear cress), this protein is Protein DJ-1 homolog A (DJ1A).